A 132-amino-acid chain; its full sequence is Fatty acid-binding protein, intestinal (132 aa).

At A2 the chain carries N-acetylalanine. W83 and R107 together coordinate hexadecanoate. Positions 83 and 107 each coordinate tetradecanoate.

It belongs to the calycin superfamily. Fatty-acid binding protein (FABP) family.

It is found in the cytoplasm. Its function is as follows. FABPs are thought to play a role in the intracellular transport of long-chain fatty acids and their acyl-CoA esters. FABP2 is probably involved in triglyceride-rich lipoprotein synthesis. Binds saturated long-chain fatty acids with a high affinity, but binds with a lower affinity to unsaturated long-chain fatty acids. FABP2 may also help maintain energy homeostasis by functioning as a lipid sensor. The chain is Fatty acid-binding protein, intestinal (FABP2) from Bos taurus (Bovine).